The following is a 327-amino-acid chain: Aspartate--ammonia ligase (327 aa).

This sequence belongs to the class-II aminoacyl-tRNA synthetase family. AsnA subfamily.

It is found in the cytoplasm. It catalyses the reaction L-aspartate + NH4(+) + ATP = L-asparagine + AMP + diphosphate + H(+). It functions in the pathway amino-acid biosynthesis; L-asparagine biosynthesis; L-asparagine from L-aspartate (ammonia route): step 1/1. The sequence is that of Aspartate--ammonia ligase from Fusobacterium nucleatum subsp. nucleatum (strain ATCC 25586 / DSM 15643 / BCRC 10681 / CIP 101130 / JCM 8532 / KCTC 2640 / LMG 13131 / VPI 4355).